The chain runs to 305 residues: Mitogen-activated protein kinase kinase 10 (305 aa).

Serine 34 is subject to Phosphoserine. A Protein kinase domain is found at 48-302 (LEKLSVLGQG…VEELLRHSFV (255 aa)). ATP contacts are provided by residues 54–62 (LGQGSGGTV) and lysine 77. Aspartate 165 acts as the Proton acceptor in catalysis. Residue threonine 200 is modified to Phosphothreonine.

This sequence belongs to the protein kinase superfamily. STE Ser/Thr protein kinase family. MAP kinase kinase subfamily. In terms of assembly, interacts with P.syringae type III effector HopF2.

The catalysed reaction is L-seryl-[protein] + ATP = O-phospho-L-seryl-[protein] + ADP + H(+). The enzyme catalyses L-threonyl-[protein] + ATP = O-phospho-L-threonyl-[protein] + ADP + H(+). It catalyses the reaction L-tyrosyl-[protein] + ATP = O-phospho-L-tyrosyl-[protein] + ADP + H(+). The protein is Mitogen-activated protein kinase kinase 10 (MKK10) of Arabidopsis thaliana (Mouse-ear cress).